The following is a 212-amino-acid chain: Large ribosomal subunit protein uL3 (212 aa).

Gln-153 carries the post-translational modification N5-methylglutamine.

Belongs to the universal ribosomal protein uL3 family. Part of the 50S ribosomal subunit. Forms a cluster with proteins L14 and L19. Methylated by PrmB.

One of the primary rRNA binding proteins, it binds directly near the 3'-end of the 23S rRNA, where it nucleates assembly of the 50S subunit. In Shewanella piezotolerans (strain WP3 / JCM 13877), this protein is Large ribosomal subunit protein uL3.